A 435-amino-acid chain; its full sequence is Serine--tRNA ligase (435 aa).

Positions glutamine 41–alanine 70 are disordered. Over residues alanine 49 to isoleucine 58 the composition is skewed to polar residues. Threonine 242 to glutamate 244 contacts L-serine. Arginine 273–glutamate 275 is an ATP binding site. Residue glutamate 296 participates in L-serine binding. ATP is bound at residue glutamate 360–serine 363. L-serine is bound at residue serine 396.

It belongs to the class-II aminoacyl-tRNA synthetase family. Type-1 seryl-tRNA synthetase subfamily. In terms of assembly, homodimer. The tRNA molecule binds across the dimer.

It is found in the cytoplasm. It carries out the reaction tRNA(Ser) + L-serine + ATP = L-seryl-tRNA(Ser) + AMP + diphosphate + H(+). The catalysed reaction is tRNA(Sec) + L-serine + ATP = L-seryl-tRNA(Sec) + AMP + diphosphate + H(+). Its pathway is aminoacyl-tRNA biosynthesis; selenocysteinyl-tRNA(Sec) biosynthesis; L-seryl-tRNA(Sec) from L-serine and tRNA(Sec): step 1/1. In terms of biological role, catalyzes the attachment of serine to tRNA(Ser). Is also able to aminoacylate tRNA(Sec) with serine, to form the misacylated tRNA L-seryl-tRNA(Sec), which will be further converted into selenocysteinyl-tRNA(Sec). The protein is Serine--tRNA ligase of Aliivibrio fischeri (strain MJ11) (Vibrio fischeri).